The primary structure comprises 82 residues: Small ribosomal subunit protein bS16 (82 aa).

This sequence belongs to the bacterial ribosomal protein bS16 family.

The chain is Small ribosomal subunit protein bS16 from Vibrio campbellii (strain ATCC BAA-1116).